We begin with the raw amino-acid sequence, 70 residues long: Small, acid-soluble spore protein I (70 aa).

Belongs to the SspI family.

It localises to the spore core. This is Small, acid-soluble spore protein I from Bacillus licheniformis (strain ATCC 14580 / DSM 13 / JCM 2505 / CCUG 7422 / NBRC 12200 / NCIMB 9375 / NCTC 10341 / NRRL NRS-1264 / Gibson 46).